Reading from the N-terminus, the 248-residue chain is Small ribosomal subunit protein uS2 (248 aa).

This sequence belongs to the universal ribosomal protein uS2 family.

The sequence is that of Small ribosomal subunit protein uS2 from Janthinobacterium sp. (strain Marseille) (Minibacterium massiliensis).